The sequence spans 164 residues: Peroxynitrite isomerase (164 aa).

The GXWXGXG signature appears at 21-27; sequence GRWGGRG. Residues K130 and H156 each contribute to the heme b site.

It belongs to the nitrobindin family. In terms of assembly, homodimer. Requires heme b as cofactor.

The catalysed reaction is peroxynitrite = nitrate. Its pathway is nitrogen metabolism. Functionally, heme-binding protein able to scavenge peroxynitrite and to protect free L-tyrosine against peroxynitrite-mediated nitration, by acting as a peroxynitrite isomerase that converts peroxynitrite to nitrate. Therefore, this protein likely plays a role in peroxynitrite sensing and in the detoxification of reactive nitrogen and oxygen species (RNS and ROS, respectively). Is able to bind nitric oxide (NO) in vitro, but may act as a sensor of peroxynitrite levels in vivo. This is Peroxynitrite isomerase from Nocardioides sp. (strain ATCC BAA-499 / JS614).